The primary structure comprises 476 residues: Aspartyl/glutamyl-tRNA(Asn/Gln) amidotransferase subunit B (476 aa).

The protein belongs to the GatB/GatE family. GatB subfamily. As to quaternary structure, heterotrimer of A, B and C subunits.

It carries out the reaction L-glutamyl-tRNA(Gln) + L-glutamine + ATP + H2O = L-glutaminyl-tRNA(Gln) + L-glutamate + ADP + phosphate + H(+). It catalyses the reaction L-aspartyl-tRNA(Asn) + L-glutamine + ATP + H2O = L-asparaginyl-tRNA(Asn) + L-glutamate + ADP + phosphate + 2 H(+). Functionally, allows the formation of correctly charged Asn-tRNA(Asn) or Gln-tRNA(Gln) through the transamidation of misacylated Asp-tRNA(Asn) or Glu-tRNA(Gln) in organisms which lack either or both of asparaginyl-tRNA or glutaminyl-tRNA synthetases. The reaction takes place in the presence of glutamine and ATP through an activated phospho-Asp-tRNA(Asn) or phospho-Glu-tRNA(Gln). The protein is Aspartyl/glutamyl-tRNA(Asn/Gln) amidotransferase subunit B of Clostridium kluyveri (strain ATCC 8527 / DSM 555 / NBRC 12016 / NCIMB 10680 / K1).